A 238-amino-acid polypeptide reads, in one-letter code: Ribonuclease PH (238 aa).

Phosphate-binding positions include Arg86 and 124 to 126; that span reads GTR.

The protein belongs to the RNase PH family. In terms of assembly, homohexameric ring arranged as a trimer of dimers.

The catalysed reaction is tRNA(n+1) + phosphate = tRNA(n) + a ribonucleoside 5'-diphosphate. Phosphorolytic 3'-5' exoribonuclease that plays an important role in tRNA 3'-end maturation. Removes nucleotide residues following the 3'-CCA terminus of tRNAs; can also add nucleotides to the ends of RNA molecules by using nucleoside diphosphates as substrates, but this may not be physiologically important. Probably plays a role in initiation of 16S rRNA degradation (leading to ribosome degradation) during starvation. The protein is Ribonuclease PH of Yersinia enterocolitica serotype O:8 / biotype 1B (strain NCTC 13174 / 8081).